Reading from the N-terminus, the 459-residue chain is UDP-N-acetylmuramoylalanine--D-glutamate ligase (459 aa).

120–126 (GSNGKTT) lines the ATP pocket.

It belongs to the MurCDEF family.

It localises to the cytoplasm. The catalysed reaction is UDP-N-acetyl-alpha-D-muramoyl-L-alanine + D-glutamate + ATP = UDP-N-acetyl-alpha-D-muramoyl-L-alanyl-D-glutamate + ADP + phosphate + H(+). It functions in the pathway cell wall biogenesis; peptidoglycan biosynthesis. In terms of biological role, cell wall formation. Catalyzes the addition of glutamate to the nucleotide precursor UDP-N-acetylmuramoyl-L-alanine (UMA). This is UDP-N-acetylmuramoylalanine--D-glutamate ligase from Lactobacillus helveticus (strain DPC 4571).